A 117-amino-acid polypeptide reads, in one-letter code: Gamma-aminobutyric acid receptor-associated protein-like 2 (117 aa).

An N6-acetyllysine modification is found at lysine 24. Phosphoserine is present on residues serine 39, serine 87, and serine 88. The Phosphatidylethanolamine amidated glycine; alternate moiety is linked to residue glycine 116. Glycine 116 is lipidated: Phosphatidylserine amidated glycine; alternate. A propeptide (removed in mature form) is located at residue phenylalanine 117.

This sequence belongs to the ATG8 family. Monomer. Interacts with ATG3, ATG7, ATG13 and ULK1. Interacts with TP53INP1 and TP53INP2. Interacts with TBC1D25. Directly interacts with SQSTM1 and BNIP3. Interacts with TECPR2 and PCM1. Interacts with TBC1D5. Interacts with TRIM5. Interacts with MEFV and TRIM21. Interacts with WDFY3. Interacts with UBA5; promoting recruitment of UBA5 to the endoplasmic reticulum membrane. Interacts with GOSR1. Interacts with KBTBD6 and KBTBD7; the interaction is direct. Interacts with reticulophagy regulators RETREG1, RETREG2 and RETREG3. Interacts with IRGM. Interacts with DNM2. Interacts with NCOA4. Interacts with IRGQ. In terms of processing, the precursor molecule is cleaved by ATG4 (ATG4A, ATG4B, ATG4C or ATG4D) to expose the glycine at the C-terminus and form the cytosolic form, GABARAPL2-I. The processed form is then activated by APG7L/ATG7, transferred to ATG3 and conjugated to phosphatidylethanolamine (PE) phospholipid to form the membrane-bound form, GABARAPL2-II. During non-canonical autophagy, the processed form is conjugated to phosphatidylserine (PS) phospholipid. ATG4 proteins also mediate the delipidation of PE-conjugated forms required for GABARAPL2 recycling when autophagosomes fuse with lysosomes. In addition, ATG4B and ATG4D mediate delipidation of ATG8 proteins conjugated to PS during non-canonical autophagy. ATG4B constitutes the major protein for proteolytic activation. ATG4D is the main enzyme for delipidation activity. Phosphorylation at Ser-87 and Ser-88 by TBK1 prevents interaction with ATG4 (ATG4A, ATG4B, ATG4C or ATG4D). Phosphorylation by TBK1 on autophagosomes prevents their delipidation by ATG4 and premature removal from nascent autophagosomes. As to expression, ubiquitous. Expressed at high levels in the brain, heart, prostate, ovary, spleen and skeletal muscle. Expressed at very low levels in lung, thymus and small intestine.

The protein resides in the cytoplasmic vesicle. It is found in the autophagosome. Its subcellular location is the endoplasmic reticulum membrane. It localises to the golgi apparatus. Ubiquitin-like modifier involved in intra-Golgi traffic. Modulates intra-Golgi transport through coupling between NSF activity and SNAREs activation. It first stimulates the ATPase activity of NSF which in turn stimulates the association with GOSR1. Involved in autophagy. Plays a role in mitophagy which contributes to regulate mitochondrial quantity and quality by eliminating the mitochondria to a basal level to fulfill cellular energy requirements and preventing excess ROS production. Whereas LC3s are involved in elongation of the phagophore membrane, the GABARAP/GATE-16 subfamily is essential for a later stage in autophagosome maturation. This is Gamma-aminobutyric acid receptor-associated protein-like 2 from Bos taurus (Bovine).